The following is a 50-amino-acid chain: Protein PndA (50 aa).

The helical transmembrane segment at 5-25 threads the bilayer; the sequence is TFLMMLIVVCVTILCFVWMVR.

Belongs to the Hok/Gef family.

Its subcellular location is the cell inner membrane. When overexpressed kill the cells from the inside by interfering with a vital function in the cell membrane. Its function is as follows. Toxic component of a type I toxin-antitoxin (TA) system. When expressed is involved in cellular Mg(2+) release and degradation of stable RNA. The polypeptide is Protein PndA (pndA) (Escherichia coli).